The sequence spans 89 residues: Small ribosomal subunit protein uS17 (89 aa).

This sequence belongs to the universal ribosomal protein uS17 family. As to quaternary structure, part of the 30S ribosomal subunit.

One of the primary rRNA binding proteins, it binds specifically to the 5'-end of 16S ribosomal RNA. In Syntrophomonas wolfei subsp. wolfei (strain DSM 2245B / Goettingen), this protein is Small ribosomal subunit protein uS17.